Consider the following 1368-residue polypeptide: DNA-directed RNA polymerase subunit beta (1368 aa).

Belongs to the RNA polymerase beta chain family. In terms of assembly, the RNAP catalytic core consists of 2 alpha, 1 beta, 1 beta' and 1 omega subunit. When a sigma factor is associated with the core the holoenzyme is formed, which can initiate transcription.

It catalyses the reaction RNA(n) + a ribonucleoside 5'-triphosphate = RNA(n+1) + diphosphate. Its function is as follows. DNA-dependent RNA polymerase catalyzes the transcription of DNA into RNA using the four ribonucleoside triphosphates as substrates. This chain is DNA-directed RNA polymerase subunit beta, found in Legionella pneumophila (strain Corby).